The primary structure comprises 647 residues: XK-related protein 4 (647 aa).

A helical transmembrane segment spans residues 142 to 162; the sequence is WFGLTLFFVVLGSLSVQVFSF. The segment at 193–238 is disordered; it reads VSSGSAAGEGEARPSTPQRQASNASKSNIAATNSGSNSNGATRTSG. Position 197 is a phosphoserine (Ser-197). Residues 207–236 show a composition bias toward polar residues; sequence STPQRQASNASKSNIAATNSGSNSNGATRT. Helical transmembrane passes span 245-265, 328-348, 362-382, 393-415, 425-445, 454-474, and 484-504; these read CSFC…GQVW, LQAL…WALA, KPIS…TIAA, VFQL…WIVH, WEEI…WFNV, LFIY…LWYL, and FAIP…VFML.

Belongs to the XK family. In terms of assembly, homodimer; homodimerization takes place upon caspase cleavage. Interacts with the processed C-terminus of XRCC4 (protein XRCC4, C-terminus); interaction promotes the phospholipid scramblase activity. Post-translationally, undergoes proteolytic processing by caspase-3 (CASP3), caspase-6 (CASP6) and caspase-7 (CASP7) to generate the XK-related protein 4, processed form, leading to its activation.

The protein localises to the cell membrane. It catalyses the reaction a 1,2-diacyl-sn-glycero-3-phospho-L-serine(in) = a 1,2-diacyl-sn-glycero-3-phospho-L-serine(out). Its activity is regulated as follows. Phospholipid scramblase activity is activated upon caspase cleavage to generate the XK-related protein 4, processed form. Does not act prior the onset of apoptosis. With respect to regulation, homodimerizes upon caspase cleavage. Phospholipid scramblase activity is activated following interaction with the processed C-terminus of XRCC4 (protein XRCC4, C-terminus). Phospholipid scramblase that promotes phosphatidylserine exposure on apoptotic cell surface. Phosphatidylserine is a specific marker only present at the surface of apoptotic cells and acts as a specific signal for engulfment. This Rattus norvegicus (Rat) protein is XK-related protein 4.